The sequence spans 142 residues: Ribosome maturation factor RimP (142 aa).

The protein belongs to the RimP family.

Its subcellular location is the cytoplasm. Required for maturation of 30S ribosomal subunits. The sequence is that of Ribosome maturation factor RimP from Aromatoleum aromaticum (strain DSM 19018 / LMG 30748 / EbN1) (Azoarcus sp. (strain EbN1)).